The chain runs to 364 residues: 3-isopropylmalate dehydrogenase (364 aa).

79-92 contacts NAD(+); sequence GPKWEHLPAAEQPE. Residues arginine 100, arginine 110, arginine 139, and aspartate 228 each coordinate substrate. The Mg(2+) site is built by aspartate 228, aspartate 252, and aspartate 256. 286 to 298 is an NAD(+) binding site; the sequence is GSAPDIAGKDIAN.

The protein belongs to the isocitrate and isopropylmalate dehydrogenases family. LeuB type 1 subfamily. As to quaternary structure, homodimer. The cofactor is Mg(2+). It depends on Mn(2+) as a cofactor.

The protein localises to the cytoplasm. It carries out the reaction (2R,3S)-3-isopropylmalate + NAD(+) = 4-methyl-2-oxopentanoate + CO2 + NADH. It functions in the pathway amino-acid biosynthesis; L-leucine biosynthesis; L-leucine from 3-methyl-2-oxobutanoate: step 3/4. Catalyzes the oxidation of 3-carboxy-2-hydroxy-4-methylpentanoate (3-isopropylmalate) to 3-carboxy-4-methyl-2-oxopentanoate. The product decarboxylates to 4-methyl-2 oxopentanoate. The sequence is that of 3-isopropylmalate dehydrogenase from Sodalis glossinidius (strain morsitans).